We begin with the raw amino-acid sequence, 284 residues long: 2-dehydro-3-deoxyphosphooctonate aldolase (284 aa).

The protein belongs to the KdsA family.

It is found in the cytoplasm. It catalyses the reaction D-arabinose 5-phosphate + phosphoenolpyruvate + H2O = 3-deoxy-alpha-D-manno-2-octulosonate-8-phosphate + phosphate. The protein operates within carbohydrate biosynthesis; 3-deoxy-D-manno-octulosonate biosynthesis; 3-deoxy-D-manno-octulosonate from D-ribulose 5-phosphate: step 2/3. It functions in the pathway bacterial outer membrane biogenesis; lipopolysaccharide biosynthesis. This Escherichia coli O6:H1 (strain CFT073 / ATCC 700928 / UPEC) protein is 2-dehydro-3-deoxyphosphooctonate aldolase.